The primary structure comprises 575 residues: Urease subunit alpha (575 aa).

Residues 138–575 (GAVDCHVHLI…LPMAQRYFLF (438 aa)) enclose the Urease domain. Residues histidine 143, histidine 145, and lysine 226 each coordinate Ni(2+). N6-carboxylysine is present on lysine 226. Histidine 228 serves as a coordination point for substrate. Ni(2+) is bound by residues histidine 255 and histidine 281. Histidine 329 acts as the Proton donor in catalysis. A Ni(2+)-binding site is contributed by aspartate 369.

It belongs to the metallo-dependent hydrolases superfamily. Urease alpha subunit family. Heterotrimer of UreA (gamma), UreB (beta) and UreC (alpha) subunits. Three heterotrimers associate to form the active enzyme. Requires Ni cation as cofactor. In terms of processing, carboxylation allows a single lysine to coordinate two nickel ions.

The protein localises to the cytoplasm. The enzyme catalyses urea + 2 H2O + H(+) = hydrogencarbonate + 2 NH4(+). It participates in nitrogen metabolism; urea degradation; CO(2) and NH(3) from urea (urease route): step 1/1. The protein is Urease subunit alpha of Frankia alni (strain DSM 45986 / CECT 9034 / ACN14a).